We begin with the raw amino-acid sequence, 641 residues long: MRKKEGRTMIEIKDLWYTYPGRTEPTLKGVNLKIEEGEFVLLTGPTGCGKSTLLKTLNGIIPHESGGVFSGSIRVNGIETRNSNQMELSSAVGLVFQNPDDQIFSTSVEDEVAFGPENLCLDREEIDKKVEEALRMVGMAEHRLDSTNALSGGQKQRICIASMLAMMPEILAMDEPVSQMDPLGTREILNTVRELNRELKITILLVEHRLHELMSFADRVVIMDGGKIVLDQPTSKAFDYIEVFHRLGLRVPEPVELCHTLGIKASPLSAEEALAVLGAGNCKEKVKTPRNFSNPEEETGRRTDPAERNEFVNTGSGNIKYGDNRSENKGSENRDSIISIRDLWSGYEKNRMVLKGINLEIRKGERVAIMGTNGSGKSTLLLNLAAMLKPYKGSVKVFGGDIQPRNSYSFAGRVGFVFQNPDLMLFCDSVDEEARFGPFQLKYKDIEERTKTSLEAMSILDLRQDLPQSLSRGQRLRTAVASVLSIDPEIILLDEPTTGQDRVNIEHMMNYFKDNCSTLVFCTHDIEIAMLYATRLLVMDDGRIIADGKGREVIKNIEILKQASLTQPPVVEIANYLGVDAISITELVEVLTRRSSEVKKDDGENYERMSSELTNSELADSGVVNSELADSGVVNSEGIKC.

Residues 10 to 250 enclose the ABC transporter 1 domain; sequence IEIKDLWYTY…IEVFHRLGLR (241 aa). Residue 44–51 participates in ATP binding; sequence GPTGCGKS. Residues 286–332 form a disordered region; it reads VKTPRNFSNPEEETGRRTDPAERNEFVNTGSGNIKYGDNRSENKGSE. 2 stretches are compositionally biased toward basic and acidic residues: residues 298–310 and 322–332; these read ETGRRTDPAERNE and GDNRSENKGSE. The ABC transporter 2 domain occupies 338–566; sequence ISIRDLWSGY…IEILKQASLT (229 aa). 371–378 contributes to the ATP binding site; it reads GTNGSGKS.

The protein belongs to the ABC transporter superfamily.

It is found in the cell membrane. Its function is as follows. Probably part of an ABC transporter complex. Responsible for energy coupling to the transport system. The chain is Putative ABC transporter ATP-binding protein MA_0870 from Methanosarcina acetivorans (strain ATCC 35395 / DSM 2834 / JCM 12185 / C2A).